Here is a 197-residue protein sequence, read N- to C-terminus: Guanylyl cyclase-activating protein 2 (197 aa).

Residue Gly-2 is the site of N-myristoyl glycine attachment. EF-hand domains lie at 15 to 50, 51 to 86, 87 to 122, and 138 to 173; these read DVAE…QDNQ, EAAD…VLRG, KLEH…IYNL, and SPEQ…DKWV. The Ca(2+) site is built by Asp-64, Asn-66, Asp-68, Thr-70, Glu-75, Asp-100, Asp-102, Asn-104, Cys-106, Glu-111, Asp-151, Asn-153, Asp-155, Gln-157, and Glu-162.

In terms of tissue distribution, low expression in retina.

Stimulates guanylyl cyclase 1 (GC1) and GC2 when free calcium ions concentration is low and inhibits guanylyl cyclases when free calcium ions concentration is elevated. This Ca(2+)-sensitive regulation of guanylyl cyclase (GC) is a key event in recovery of the dark state of rod photoreceptors following light exposure. The chain is Guanylyl cyclase-activating protein 2 (GUCA1B) from Lithobates pipiens (Northern leopard frog).